A 345-amino-acid polypeptide reads, in one-letter code: Phenylalanine--tRNA ligase alpha subunit (345 aa).

Residue E255 participates in Mg(2+) binding.

This sequence belongs to the class-II aminoacyl-tRNA synthetase family. Phe-tRNA synthetase alpha subunit type 1 subfamily. Tetramer of two alpha and two beta subunits. Mg(2+) is required as a cofactor.

It localises to the cytoplasm. It carries out the reaction tRNA(Phe) + L-phenylalanine + ATP = L-phenylalanyl-tRNA(Phe) + AMP + diphosphate + H(+). The sequence is that of Phenylalanine--tRNA ligase alpha subunit from Lysinibacillus sphaericus (strain C3-41).